We begin with the raw amino-acid sequence, 366 residues long: Chorismate synthase (366 aa).

Arg48 and Arg54 together coordinate NADP(+). FMN is bound by residues 125 to 127, 238 to 239, Gly278, 293 to 297, and Arg319; these read RSS, NA, and KPTSS.

This sequence belongs to the chorismate synthase family. As to quaternary structure, homotetramer. The cofactor is FMNH2.

The enzyme catalyses 5-O-(1-carboxyvinyl)-3-phosphoshikimate = chorismate + phosphate. The protein operates within metabolic intermediate biosynthesis; chorismate biosynthesis; chorismate from D-erythrose 4-phosphate and phosphoenolpyruvate: step 7/7. In terms of biological role, catalyzes the anti-1,4-elimination of the C-3 phosphate and the C-6 proR hydrogen from 5-enolpyruvylshikimate-3-phosphate (EPSP) to yield chorismate, which is the branch point compound that serves as the starting substrate for the three terminal pathways of aromatic amino acid biosynthesis. This reaction introduces a second double bond into the aromatic ring system. The chain is Chorismate synthase from Ralstonia pickettii (strain 12J).